The following is a 347-amino-acid chain: Neutral protease 2 homolog MGG_10927 (347 aa).

A signal peptide spans 1–19 (MKYSVGITALLATLAQGAA). Residues 20 to 176 (VMSKRDIPLD…RSYLAKRTMV (157 aa)) constitute a propeptide that is removed on maturation. 2 disulfide bridges follow: Cys180–Cys250 and Cys257–Cys275. His299 serves as a coordination point for Zn(2+). The active site involves Glu300. His303 lines the Zn(2+) pocket.

It belongs to the peptidase M35 family. Requires Zn(2+) as cofactor.

The protein resides in the secreted. The enzyme catalyses Preferential cleavage of bonds with hydrophobic residues in P1'. Also 3-Asn-|-Gln-4 and 8-Gly-|-Ser-9 bonds in insulin B chain.. Secreted metalloproteinase that allows assimilation of proteinaceous substrates. Shows high activities on basic nuclear substrates such as histone and protamine. This Pyricularia oryzae (strain 70-15 / ATCC MYA-4617 / FGSC 8958) (Rice blast fungus) protein is Neutral protease 2 homolog MGG_10927.